A 646-amino-acid chain; its full sequence is Long-chain fatty acid transport protein 1 (646 aa).

At 1-13 (MRAPGAGAASVVS) the chain is on the extracellular side. A helical transmembrane segment spans residues 14–34 (LALLWLLGLPWTWSAAAALGV). The Cytoplasmic segment spans residues 35 to 646 (YVGSGGWRFL…TRICSGAFAL (612 aa)). The segment at 191 to 475 (EVSGHLGKSL…YVSESATSKK (285 aa)) is sufficient for oligomerization. Position 246–257 (246–257 (YIYTSGTTGLPK)) interacts with AMP.

This sequence belongs to the ATP-dependent AMP-binding enzyme family. Self-associates. May function as a homodimer. Interacts with EPRS1; mediates the translocation of SLC27A1 from the cytoplasm to the plasma membrane thereby increasing the uptake of long-chain fatty acids. Interacts with DGAT2 and this interaction is enhanced in the presence of ZFYVE1. Highest levels of expression are detected in muscle and adipose tissue small, intermediate levels in small intestine, and barely detectable in liver. Expressed in brain gray matter.

It localises to the cell membrane. It is found in the endomembrane system. The protein resides in the cytoplasm. The catalysed reaction is a fatty acid(in) = a fatty acid(out). The enzyme catalyses (9Z)-octadecenoate(out) = (9Z)-octadecenoate(in). It carries out the reaction hexadecanoate(out) = hexadecanoate(in). It catalyses the reaction (9Z,12Z)-octadecadienoate(out) = (9Z,12Z)-octadecadienoate(in). The catalysed reaction is (5Z,8Z,11Z,14Z)-eicosatetraenoate(out) = (5Z,8Z,11Z,14Z)-eicosatetraenoate(in). The enzyme catalyses a long-chain fatty acid + ATP + CoA = a long-chain fatty acyl-CoA + AMP + diphosphate. It carries out the reaction (5Z,8Z,11Z,14Z)-eicosatetraenoate + ATP + CoA = (5Z,8Z,11Z,14Z)-eicosatetraenoyl-CoA + AMP + diphosphate. It catalyses the reaction a very long-chain fatty acid + ATP + CoA = a very long-chain fatty acyl-CoA + AMP + diphosphate. The catalysed reaction is tetracosanoate + ATP + CoA = tetracosanoyl-CoA + AMP + diphosphate. With respect to regulation, inhibited by Triacsin C. Functionally, mediates the import of long-chain fatty acids (LCFA) into the cell by facilitating their transport at the plasma membrane. Also functions as an acyl-CoA ligase catalyzing the ATP-dependent formation of fatty acyl-CoA using LCFA and very-long-chain fatty acids (VLCFA) as substrates, which prevents fatty acid efflux from cells and might drive more fatty acid uptake. May act directly as a bona fide transporter, or alternatively, in a cytoplasmic or membrane-associated multimeric protein complex to trap and draw fatty acids towards accumulation. Plays a pivotal role in regulating available LCFA substrates from exogenous sources in tissues undergoing high levels of beta-oxidation or triglyceride synthesis. May be involved in regulation of cholesterol metabolism. Probably involved in fatty acid transport across the blood barrier. This chain is Long-chain fatty acid transport protein 1, found in Homo sapiens (Human).